A 517-amino-acid chain; its full sequence is Crotonobetaine/carnitine--CoA ligase (517 aa).

This sequence belongs to the ATP-dependent AMP-binding enzyme family.

It catalyses the reaction 4-(trimethylamino)butanoate + ATP + CoA = 4-(trimethylamino)butanoyl-CoA + AMP + diphosphate. The enzyme catalyses crotonobetaine + ATP + CoA = crotonobetainyl-CoA + AMP + diphosphate. It carries out the reaction (R)-carnitine + ATP + CoA = (R)-carnitinyl-CoA + AMP + diphosphate. The protein operates within amine and polyamine metabolism; carnitine metabolism. Catalyzes the transfer of CoA to carnitine, generating the initial carnitinyl-CoA needed for the CaiB reaction cycle. Also has activity toward crotonobetaine and gamma-butyrobetaine. The polypeptide is Crotonobetaine/carnitine--CoA ligase (Escherichia coli (strain ATCC 8739 / DSM 1576 / NBRC 3972 / NCIMB 8545 / WDCM 00012 / Crooks)).